Consider the following 107-residue polypeptide: Frataxin (107 aa).

It belongs to the frataxin family. As to quaternary structure, monomer.

It localises to the cytoplasm. In terms of biological role, promotes the assembly and repair of iron-sulfur clusters by delivering Fe(2+) to proteins involved in these pathways. This chain is Frataxin (YFH1), found in Trachipleistophora hominis (Microsporidian parasite).